An 86-amino-acid polypeptide reads, in one-letter code: Putative defensin-like protein 244 (86 aa).

The first 22 residues, 1 to 22 (MKGIAMLLVSCLLFSFLSTNLA), serve as a signal peptide directing secretion. Intrachain disulfides connect C28/C83, C38/C67, C48/C77, and C65/C79.

It belongs to the DEFL family.

It localises to the secreted. The sequence is that of Putative defensin-like protein 244 (SCRL11) from Arabidopsis thaliana (Mouse-ear cress).